The primary structure comprises 96 residues: uncharacterized protein (96 aa).

The first 19 residues, 1–19 (MKFLSALLLIVLLISVVFG), serve as a signal peptide directing secretion. The N-linked (GlcNAc...) asparagine glycan is linked to Asn-20. Over residues 27–46 (AWATTTTGGTTGSQTSPATH) the composition is skewed to low complexity. Positions 27-58 (AWATTTTGGTTGSQTSPATHGGHGGNGGNGHS) are disordered. Positions 47–56 (GGHGGNGGNG) are enriched in gly residues.

The protein resides in the secreted. This is an uncharacterized protein from Dictyostelium discoideum (Social amoeba).